The chain runs to 662 residues: Glutathione hydrolase 7 (662 aa).

The Cytoplasmic segment spans residues 1-106 (MAAENEASQE…AAECSCRQDG (106 aa)). Phosphoserine occurs at positions 17, 72, 79, and 83. The segment at 26 to 90 (SFPRLPEDEP…DGSPLRETRK (65 aa)) is disordered. Low complexity predominate over residues 72-83 (SSSSEMGSQDGS). Residues 107 to 127 (LTVIVTACLTFATGVTVALVM) form a helical; Signal-anchor for type II membrane protein membrane-spanning segment. The Extracellular segment spans residues 128–662 (QIYFGDPQIF…SPDAAGATIL (535 aa)). N198, N267, N283, N330, N353, N394, N519, N523, and N586 each carry an N-linked (GlcNAc...) asparagine glycan.

It belongs to the gamma-glutamyltransferase family. As to quaternary structure, heterodimer composed of the light and heavy chains. The active site is located in the light chain. Cleaved by autocatalysis into a large and a small subunit and the autocatalytic cleavage is essential to the functional activation of the enzyme.

The protein resides in the membrane. It carries out the reaction an N-terminal (5-L-glutamyl)-[peptide] + an alpha-amino acid = 5-L-glutamyl amino acid + an N-terminal L-alpha-aminoacyl-[peptide]. It catalyses the reaction glutathione + H2O = L-cysteinylglycine + L-glutamate. The catalysed reaction is an S-substituted glutathione + H2O = an S-substituted L-cysteinylglycine + L-glutamate. The protein operates within sulfur metabolism; glutathione metabolism. Hydrolyzes and transfers gamma-glutamyl moieties from glutathione and other gamma-glutamyl compounds to acceptors. The chain is Glutathione hydrolase 7 from Mus musculus (Mouse).